The chain runs to 266 residues: Ankyrin repeat domain-containing protein 45 (266 aa).

Acidic residues-rich tracts occupy residues 1 to 11 and 18 to 32; these read MESEGPPESES and QEEE…EPEE. The segment at 1–43 is disordered; it reads MESEGPPESESSEFFSQQEEENEEEEAQEPEETGPKNPLLQPA. ANK repeat units lie at residues 76–105 and 109–138; these read VGRN…NLNE and RGYT…DIEA.

It localises to the cytoplasm. It is found in the midbody. The protein resides in the midbody ring. Its subcellular location is the cleavage furrow. May play a role during cell division. The protein is Ankyrin repeat domain-containing protein 45 of Homo sapiens (Human).